The chain runs to 624 residues: Kelch-like ECH-associated protein 1 (624 aa).

Residues 1–27 are disordered; sequence MQPEPRPSGAGAHTQFLPLRSQRPEGA. An S-(2-succinyl)cysteine modification is found at cysteine 38. A BTB domain is found at 77-149; that stretch reads CDVTLQVKYE…AYTASISMGE (73 aa). Arginine 135 is covalently cross-linked (N5-[4-(S-L-cysteinyl)-5-methyl-1H-imidazol-2-yl]-L-ornithine (Arg-Cys) (interchain with C-151 in KEAP1)). S-(2-succinyl)cysteine occurs at positions 151 and 241. Cysteine 151 carries the post-translational modification S-(2,3-dicarboxypropyl)cysteine; alternate. Position 151 is an S-nitrosocysteine; alternate (cysteine 151). Cysteine 151 participates in a covalent cross-link: N5-[4-(S-L-cysteinyl)-5-methyl-1H-imidazol-2-yl]-L-ornithine (Cys-Arg) (interchain with R-135 in KEAP1). The BACK domain maps to 184 to 286; sequence AIGIANFAEQ…TPHFLQMQLQ (103 aa). Cysteine 257 and cysteine 273 each carry S-(2,3-dicarboxypropyl)cysteine. 2 positions are modified to S-(2-succinyl)cysteine: cysteine 288 and cysteine 319. S-(2,3-dicarboxypropyl)cysteine; alternate is present on cysteine 288. Kelch repeat units follow at residues 327–372, 373–423, 424–470, 471–517, 519–564, and 565–611; these read LIYT…VVGG, LLYA…VIDG, HIYA…VLNR, LLYA…VLHN, IYAA…VHQG, and RIYV…VTME. Position 434 is an S-cGMP-cysteine (cysteine 434). Residue cysteine 613 is modified to S-(2-succinyl)cysteine.

It belongs to the KEAP1 family. In terms of assembly, component of the BCR(KEAP1) E3 ubiquitin ligase complex, at least composed of 2 molecules of CUL3, 2 molecules of KEAP1, and RBX1. Interacts with NFE2L2/NRF2; the interaction is direct. Forms a ternary complex with NFE2L2/NRF2 and PGAM5. Interacts with (phosphorylated) SQSTM1/p62; the interaction is direct and inactivates the BCR(KEAP1) complex by sequestering it in inclusion bodies, promoting its degradation. Interacts with NFE2L1. Interacts with BPTF and PTMA. Interacts with MAP1LC3B. Interacts indirectly with ENC1. Interacts with SESN1 and SESN2. Interacts with HSP90AA1 and HSP90AB1. Interacts with PGCKA1; this interaction prevents the ubiquitination of KEAP1 by TRIM25, thus protecting KEAP1 protein from degradation. In terms of processing, non-enzymatic covalent modifications of reactive cysteines by electrophile metabolites inactivate the BCR(KEAP1) complex. Accumulation of fumarate promotes the formation of cysteine S-succination (S-(2-succinyl)cysteine), leading to inactivate the BCR(KEAP1) complex and promote NFE2L2/NRF2 nuclear accumulation and activation. Nitric oxide-dependent 8-Nitro-cGMP formation promotes cysteine guanylation (S-cGMP-cysteine), leading to NFE2L2/NRF2 nuclear accumulation and activation. Itaconate, an anti-inflammatory metabolite generated in response to lipopolysaccharide, alkylates cysteines, activating NFE2L2/NRF2. Methylglyoxal, a reactive metabolite that accumulates when the glycolytic enzyme PGK1 is inhibited, promotes formation of a methylimidazole cross-link between proximal Cys-151 and Arg-135 on another KEAP1 molecule, resulting in an inactive dimer that inactivates the BCR(KEAP1) complex. Post-translationally, degraded via a proteasomal-independent process during selective autophagy: interaction with phosphorylated SQSTM1/p62 sequesters KEAP1 in inclusion bodies, leading to its degradation. Auto-ubiquitinated by the BCR(KEAP1) complex. Quinone-induced oxidative stress, but not sulforaphane, increases its ubiquitination. Ubiquitination and subsequent degradation is most pronounced following prolonged exposure of cells to oxidative stress, particularly in glutathione-deficient cells that are highly susceptible to oxidative stress. Deubiquitinated by USP25; leading to stabilization. Ubiquitinated by TRIM25; leading to degradation upon ER stress.

It localises to the cytoplasm. The protein resides in the nucleus. It functions in the pathway protein modification; protein ubiquitination. With respect to regulation, ubiquitin ligase activity of the BCR(KEAP1) complex is inhibited by oxidative stress and electrophile metabolites such as sulforaphane. Electrophile metabolites react with reactive cysteine residues in KEAP1 and trigger non-enzymatic covalent modifications of these cysteine residues, leading to inactivate the ubiquitin ligase activity of the BCR(KEAP1) complex. Selective autophagy also inactivates the BCR(KEAP1) complex via interaction between KEAP1 and SQSTM1/p62, which sequesters the complex in inclusion bodies and promotes its degradation. In terms of biological role, substrate-specific adapter of a BCR (BTB-CUL3-RBX1) E3 ubiquitin ligase complex that regulates the response to oxidative stress by targeting NFE2L2/NRF2 for ubiquitination. KEAP1 acts as a key sensor of oxidative and electrophilic stress: in normal conditions, the BCR(KEAP1) complex mediates ubiquitination and degradation of NFE2L2/NRF2, a transcription factor regulating expression of many cytoprotective genes. In response to oxidative stress, different electrophile metabolites trigger non-enzymatic covalent modifications of highly reactive cysteine residues in KEAP1, leading to inactivate the ubiquitin ligase activity of the BCR(KEAP1) complex, promoting NFE2L2/NRF2 nuclear accumulation and expression of phase II detoxifying enzymes. In response to selective autophagy, KEAP1 is sequestered in inclusion bodies following its interaction with SQSTM1/p62, leading to inactivation of the BCR(KEAP1) complex and activation of NFE2L2/NRF2. The BCR(KEAP1) complex also mediates ubiquitination of SQSTM1/p62, increasing SQSTM1/p62 sequestering activity and degradation. The BCR(KEAP1) complex also targets BPTF and PGAM5 for ubiquitination and degradation by the proteasome. This Sus scrofa (Pig) protein is Kelch-like ECH-associated protein 1.